The sequence spans 271 residues: Delta(7)-sterol-C5(6)-desaturase (271 aa).

The next 2 helical transmembrane spans lie at 44 to 64 (IGGVLLYFISGFLWCFYIYHL) and 120 to 140 (VGWLSYVIYAAIYLVIVEFGI). The Fatty acid hydroxylase domain maps to 130–259 (AIYLVIVEFG…TIWMDWMFGT (130 aa)). The Histidine box-1 motif lies at 144–148 (HMELH). The Histidine box-2 motif lies at 158–162 (HATHH). A helical transmembrane segment spans residues 190–210 (HVVALLLVPMHFSTHIALIFL). Positions 235–239 (HTIHH) match the Histidine box-3 motif.

Belongs to the sterol desaturase family. It depends on Fe cation as a cofactor.

It localises to the endoplasmic reticulum membrane. The enzyme catalyses a Delta(7)-sterol + 2 Fe(II)-[cytochrome b5] + O2 + 2 H(+) = a Delta(5),Delta(7)-sterol + 2 Fe(III)-[cytochrome b5] + 2 H2O. Functionally, involved in the biosynthesis of sitosterol and campesterol. In Nicotiana tabacum (Common tobacco), this protein is Delta(7)-sterol-C5(6)-desaturase.